The primary structure comprises 309 residues: Protease HtpX homolog (309 aa).

2 helical membrane-spanning segments follow: residues 7–27 (TTVL…MLGG) and 29–49 (QGMM…YWYS). H131 lines the Zn(2+) pocket. The active site involves E132. Residue H135 coordinates Zn(2+). A run of 2 helical transmembrane segments spans residues 141–161 (ILIG…ASMA) and 182–202 (IGLI…QMAI). Zn(2+) is bound at residue E207. Positions 278–309 (RHGSDSGTGNRDSSIRRRNMNTEAKAAWDRLR) are disordered.

The protein belongs to the peptidase M48B family. It depends on Zn(2+) as a cofactor.

The protein resides in the cell inner membrane. The polypeptide is Protease HtpX homolog (Desulforapulum autotrophicum (strain ATCC 43914 / DSM 3382 / VKM B-1955 / HRM2) (Desulfobacterium autotrophicum)).